The following is a 137-amino-acid chain: Thioredoxin-like protein R548 (137 aa).

The region spanning 2-137 (SKDSVETNTI…LEKSIVESSQ (136 aa)) is the Thioredoxin domain. Residues C61 and C64 each act as nucleophile in the active site. An intrachain disulfide couples C61 to C64.

This sequence belongs to the thioredoxin family.

Participates in various redox reactions through the reversible oxidation of its active center dithiol to a disulfide and catalyzes dithiol-disulfide exchange reactions. This chain is Thioredoxin-like protein R548, found in Acanthamoeba polyphaga mimivirus (APMV).